The following is a 3165-amino-acid chain: ORFB polyprotein (3165 aa).

Residues Met-271 to Gly-418 enclose the Peptidase C8 domain. Active-site for papain-like protease p48 activity residues include Cys-341 and His-388. Residues Ala-453–Glu-472 are disordered. 6 helical membrane-spanning segments follow: residues Ile-791–Tyr-811, Tyr-823–Cys-843, Ala-1166–Met-1186, Lys-1193–Trp-1213, Phe-1215–Tyr-1235, and Ala-1356–Pro-1376. Residues Phe-1793 to Trp-2208 are RNA-directed RNA polymerase. The next 3 membrane-spanning stretches (helical) occupy residues Val-2495–Val-2515, Leu-2517–Trp-2537, and Leu-2590–Phe-2610. Residues Ala-2651 to Lys-2796 enclose the Helicase ATP-binding domain. Ala-2664–Ser-2671 lines the ATP pocket. Positions Asp-2751–His-2754 match the DEFH box motif.

This sequence in the C-terminal section; belongs to the DEAD box helicase family. In terms of processing, papain-like protease p48 is autocatalytically processed. The putative RNA-directed RNA polymerase/helicase may be further processed.

It is found in the host membrane. It carries out the reaction RNA(n) + a ribonucleoside 5'-triphosphate = RNA(n+1) + diphosphate. The enzyme catalyses ATP + H2O = ADP + phosphate + H(+). Functionally, papain-like protease p48 is a cysteine protease of the peptidase family C8. This is ORFB polyprotein from Cryphonectria hypovirus 1 (strain EP713) (CHV-1/EP713).